The sequence spans 430 residues: UDP-N-acetylglucosamine 1-carboxyvinyltransferase (430 aa).

22–23 (KN) is a phosphoenolpyruvate binding site. R102 provides a ligand contact to UDP-N-acetyl-alpha-D-glucosamine. Residue C126 is the Proton donor of the active site. C126 is modified (2-(S-cysteinyl)pyruvic acid O-phosphothioketal). Residues 131-135 (RPVDL), 172-175 (KVSV), D317, and I339 contribute to the UDP-N-acetyl-alpha-D-glucosamine site.

It belongs to the EPSP synthase family. MurA subfamily.

The protein localises to the cytoplasm. The catalysed reaction is phosphoenolpyruvate + UDP-N-acetyl-alpha-D-glucosamine = UDP-N-acetyl-3-O-(1-carboxyvinyl)-alpha-D-glucosamine + phosphate. Its pathway is cell wall biogenesis; peptidoglycan biosynthesis. Its function is as follows. Cell wall formation. Adds enolpyruvyl to UDP-N-acetylglucosamine. This Allorhizobium ampelinum (strain ATCC BAA-846 / DSM 112012 / S4) (Agrobacterium vitis (strain S4)) protein is UDP-N-acetylglucosamine 1-carboxyvinyltransferase.